The following is a 361-amino-acid chain: MYIKSLQLINYRNYENLSIKLCPNVNVFIGDNAQGKTNVIEAIYYCGFAKSHRTNRDKELIEWNKDRAFIRLDVHKDRLDKIIDVNILKDGKKAISINSIKISKIGELIGTFNVVMFSPEDLKIVKESPGIRRRFIDMELSQLNKRYYHNLVQYNKVLHERNLVLKNKNINEEMLDIYDIQLAQYGENIIKTRLKYIEQLNKYSKEIHKEITSGKEEIEFKYISTVKDLDNIKDSMIKLLEQNRKKDIDKRATSIGPHRDDFNIYLNNIDAKIYGSQGQQRTSVLTIKFASLKIIKEITGEYPVLLLDDVLSELDFNRKRYVLTSIKNIQTVITCTGIEDLTSYLDENSKVFRVINGRIQC.

Glycine 30 to threonine 37 lines the ATP pocket.

It belongs to the RecF family.

The protein resides in the cytoplasm. The RecF protein is involved in DNA metabolism; it is required for DNA replication and normal SOS inducibility. RecF binds preferentially to single-stranded, linear DNA. It also seems to bind ATP. The sequence is that of DNA replication and repair protein RecF from Clostridium perfringens (strain ATCC 13124 / DSM 756 / JCM 1290 / NCIMB 6125 / NCTC 8237 / Type A).